A 426-amino-acid polypeptide reads, in one-letter code: L-ascorbate peroxidase T, chloroplastic (426 aa).

H112 acts as the Proton acceptor in catalysis. H241 contributes to the heme b binding site. T242 serves as a coordination point for K(+). The interval 245 to 269 (RARPDRSGWGKPETKYTKTGPGEAG) is disordered. Positions 246 to 260 (ARPDRSGWGKPETKY) are enriched in basic and acidic residues. K(+) is bound by residues T274 and D281. A helical membrane pass occupies residues 397-417 (YFLNIIIAIGVLVLLSTLFGG).

It belongs to the peroxidase family. Ascorbate peroxidase subfamily. It depends on heme b as a cofactor.

The protein localises to the plastid. It is found in the chloroplast thylakoid membrane. It carries out the reaction L-ascorbate + H2O2 = L-dehydroascorbate + 2 H2O. Its function is as follows. Plays a key role in hydrogen peroxide removal. This Arabidopsis thaliana (Mouse-ear cress) protein is L-ascorbate peroxidase T, chloroplastic (APXT).